The following is a 240-amino-acid chain: Expansin-A20 (240 aa).

Residues 1 to 21 form the signal peptide; that stretch reads MGNILLQLLAVVALCIAPARS. The 105-residue stretch at 41 to 145 folds into the Expansin-like EG45 domain; the sequence is GGACGYGNLY…QQVKCWRYGG (105 aa). N-linked (GlcNAc...) asparagine glycans are attached at residues asparagine 107 and asparagine 207. Residues 155–234 form the Expansin-like CBD domain; the sequence is YFELVLVTNM…GWSFGQTFST (80 aa).

Belongs to the expansin family. Expansin A subfamily.

The protein resides in the secreted. The protein localises to the cell wall. It is found in the membrane. May cause loosening and extension of plant cell walls by disrupting non-covalent bonding between cellulose microfibrils and matrix glucans. No enzymatic activity has been found. May be required for rapid internodal elongation in deepwater rice during submergence. This chain is Expansin-A20 (EXPA20), found in Oryza sativa subsp. japonica (Rice).